Consider the following 586-residue polypeptide: NudC domain-containing protein 1 (586 aa).

Residues 275 to 364 (KREPLYNWQQ…EPGCTWAELV (90 aa)) form the CS domain.

The protein localises to the cytoplasm. The protein resides in the nucleus. The sequence is that of NudC domain-containing protein 1 from Xenopus laevis (African clawed frog).